A 285-amino-acid polypeptide reads, in one-letter code: mRNA decay factor CTH2 (285 aa).

The interval 37 to 55 is required for mRNA decay activity; sequence INIRELEEYYNKTILNEDN. A disordered region spans residues 132-164; sequence LQQLSQQKPKNDASFSSEKESSAQPKVKSQVQE. A compositionally biased stretch (polar residues) spans 153-164; the sequence is SAQPKVKSQVQE. 2 C3H1-type zinc fingers span residues 169-197 and 207-235; these read LYKTELCESFTLKGSCPYGSKCQFAHGLG and NFRTKPCVNWEKLGYCPYGRRCCFKHGDD. Residues 252–271 are disordered; that stretch reads STSKQSDEKRSNGRGSAKKK.

Interacts with DHH1.

The protein resides in the nucleus. It localises to the cytoplasm. It is found in the P-body. Binds to specific AU-rich elements (ARE) in the 3'-untranslated region of target mRNAs and promotes their degradation. In response to iron deficiency, promotes the decay of many mRNAs encoding proteins involved in iron-dependent pathways. Recruits the DHH1 helicase to the SDH4 mRNA and promotes SDH4 mRNA decay. Also destabilizes target mRNA by modulating 3'-end processing, creating extended transcripts that are prone for degradation. The sequence is that of mRNA decay factor CTH2 (TIS11) from Saccharomyces cerevisiae (strain ATCC 204508 / S288c) (Baker's yeast).